Here is a 68-residue protein sequence, read N- to C-terminus: Large ribosomal subunit protein uL30 (68 aa).

It belongs to the universal ribosomal protein uL30 family. Part of the 50S ribosomal subunit.

This chain is Large ribosomal subunit protein uL30, found in Bartonella tribocorum (strain CIP 105476 / IBS 506).